The following is a 178-amino-acid chain: Hypoxanthine phosphoribosyltransferase (178 aa).

Arg43 and Gly44 together coordinate diphosphate. Glu99 is a GMP binding site. Glu99 is a binding site for IMP. The Mg(2+) site is built by Glu99 and Asp100. Asp103 functions as the Proton acceptor in the catalytic mechanism. GMP is bound by residues Asp103 to Leu108, Lys131, and Asp159. IMP is bound by residues Asp103–Leu108 and Lys131. Arg165 serves as a coordination point for diphosphate.

The protein belongs to the purine/pyrimidine phosphoribosyltransferase family. In terms of assembly, homotetramer. Mg(2+) is required as a cofactor.

Its subcellular location is the cytoplasm. The enzyme catalyses IMP + diphosphate = hypoxanthine + 5-phospho-alpha-D-ribose 1-diphosphate. The catalysed reaction is GMP + diphosphate = guanine + 5-phospho-alpha-D-ribose 1-diphosphate. Its pathway is purine metabolism; IMP biosynthesis via salvage pathway; IMP from hypoxanthine: step 1/1. Its function is as follows. Purine salvage pathway enzyme which catalyzes the transfer of the ribosyl-5-phosphate group from 5-phospho-alpha-D-ribose 1-diphosphate (PRPP) to the N9 position of hypoxanthine to yield IMP (inosine 5'-monophosphate). To a lesser extent, can also act on guanine leading to GMP, but shows a highly less efficient activity with xanthine. The sequence is that of Hypoxanthine phosphoribosyltransferase (hpt) from Shigella flexneri.